A 404-amino-acid polypeptide reads, in one-letter code: Sorting nexin-32 (404 aa).

Over residues 1 to 10 the composition is skewed to basic and acidic residues; it reads MEEQHQEAGN. The interval 1–29 is disordered; it reads MEEQHQEAGNESKPSSTSVDLQGDSPLQV. Positions 11 to 20 are enriched in polar residues; that stretch reads ESKPSSTSVD. A PX domain is found at 21–168; the sequence is LQGDSPLQVE…SVFLEYSQDL (148 aa). A coiled-coil region spans residues 255–336; sequence TQEVNQLKRS…KARTRNREVR (82 aa).

It belongs to the sorting nexin family.

Its function is as follows. May be involved in several stages of intracellular trafficking. This chain is Sorting nexin-32 (Snx32), found in Mus musculus (Mouse).